Here is a 265-residue protein sequence, read N- to C-terminus: Capsule polysaccharide export inner-membrane protein CtrC (265 aa).

6 helical membrane passes run 37–57, 64–84, 121–141, 147–167, 178–198, and 236–256; these read IGFL…VLMW, NVSA…MMMW, IAGA…IGWI, IFYM…LGLV, FGKV…VFFF, and NPWY…AVVA. Positions 37–258 constitute an ABC transmembrane type-2 domain; the sequence is IGFLWLFVEP…LLGLAVVARF (222 aa).

Belongs to the ABC-2 integral membrane protein family.

It localises to the cell inner membrane. In terms of biological role, may form an ATP-driven capsule polysaccharide export apparatus, in association with the CtrB and CtrD proteins. The polypeptide is Capsule polysaccharide export inner-membrane protein CtrC (ctrC) (Neisseria meningitidis serogroup A / serotype 4A (strain DSM 15465 / Z2491)).